A 287-amino-acid chain; its full sequence is UPF0098 protein AF_1698 (287 aa).

The protein belongs to the UPF0098 family.

The sequence is that of UPF0098 protein AF_1698 from Archaeoglobus fulgidus (strain ATCC 49558 / DSM 4304 / JCM 9628 / NBRC 100126 / VC-16).